We begin with the raw amino-acid sequence, 186 residues long: Ribosome-recycling factor (186 aa).

The protein belongs to the RRF family.

The protein resides in the cytoplasm. Responsible for the release of ribosomes from messenger RNA at the termination of protein biosynthesis. May increase the efficiency of translation by recycling ribosomes from one round of translation to another. This Janthinobacterium sp. (strain Marseille) (Minibacterium massiliensis) protein is Ribosome-recycling factor.